We begin with the raw amino-acid sequence, 1609 residues long: Transmembrane protein 131-like (1609 aa).

The N-terminal stretch at 1-40 (MAGLRRPQPGCYCRTAAAVNLLLGVFQVLLPCCRPGGAQG) is a signal peptide. Over 41–869 (QAIEPLPNVV…VVPGPSWEES (829 aa)) the chain is Extracellular. Residues asparagine 343, asparagine 439, asparagine 522, asparagine 593, asparagine 709, and asparagine 846 are each glycosylated (N-linked (GlcNAc...) asparagine). The tract at residues 696 to 916 (DYGKVTSLIL…QNASSSSQQN (221 aa)) is required for Wnt-signaling inhibition and LRP6 degradation. Residues 870 to 890 (FWRLTVFFVSLSLLGVILIAF) form a helical membrane-spanning segment. Residues 891–1609 (QQAQYILMEF…SRDSSYCGNV (719 aa)) are Cytoplasmic-facing. Disordered regions lie at residues 946 to 974 (RGKNCLPVNTPQSRIQNAAKRSPATYGHS), 991 to 1014 (TAAASSTSTTTEEKQTSPLGSSLP), 1108 to 1144 (KTSKKLPENHLPRNSPQYHQPDLPEISRKNNGNNQQV), 1159 to 1178 (VDTKPSSEKKIHKTSREDMF), and 1304 to 1340 (SSSDCGSSSGSVRASRGSWGSWSSTSSSDGDKKPMVD). Positions 952-961 (PVNTPQSRIQ) are enriched in polar residues. Positions 991–1000 (TAAASSTSTT) are enriched in low complexity. Serine 1122 carries the phosphoserine modification. A compositionally biased stretch (low complexity) spans 1304-1331 (SSSDCGSSSGSVRASRGSWGSWSSTSSS).

This sequence belongs to the TMEM131 family. Expressed in thymocytes.

The protein localises to the cell membrane. Its subcellular location is the cytoplasm. It localises to the endoplasmic reticulum. Membrane-associated form that antagonizes canonical Wnt signaling by triggering lysosome-dependent degradation of Wnt-activated LRP6. Regulates thymocyte proliferation. The polypeptide is Transmembrane protein 131-like (Homo sapiens (Human)).